Reading from the N-terminus, the 369-residue chain is Serine/threonine-protein acetyltransferase HopZ1a (369 aa).

The disordered stretch occupies residues 1 to 46 (MGNVCVGGSRMSHQVYSPDRADTPPRSERNTPDRRQRAAGDAERTQ). The segment covering 19–46 (DRADTPPRSERNTPDRRQRAAGDAERTQ) has biased composition (basic and acidic residues). Residues Arg-49, Lys-53, and Arg-106 each coordinate 1D-myo-inositol hexakisphosphate. Active-site residues include His-150 and Glu-170. His-150 is a CoA binding site. CoA-binding positions include Ala-177 and 211–212 (KT). Residue Cys-216 is part of the active site. 1D-myo-inositol hexakisphosphate-binding positions include Asn-222, 226-229 (KAHK), and 289-290 (KH). Lys-289 bears the N6-acetyllysine; by autocatalysis mark. A CoA-binding site is contributed by 292-295 (ASLT). Residues 314–317 (SEGH) and Arg-326 contribute to the 1D-myo-inositol hexakisphosphate site. CoA is bound by residues 331–334 (RVKR) and 344–348 (SNTQF). 1D-myo-inositol hexakisphosphate-binding residues include Gln-358 and Arg-362.

The protein belongs to the acetyltransferase YopJ family. Interacts with host plant JAZ proteins (e.g. Glycine max JAZ1 and Arabidospis thaliana TIFY10B/JAZ2, TIFY11A/JAZ5, TIFY11B/JAZ6, TIFY5A/JAZ8 and TIFY3B/JAZ12) and triggers their degradation. Binds directly to SZE1 and SZE2 at the host plasma membrane; this interaction with a complex made of, at least, SZE1, BKN2/SZE2, ZAR1 and ZED1 triggers host immunity. 1D-myo-inositol hexakisphosphate is required as a cofactor. In terms of processing, autoacetylated at Lys-289; while autoacetylation at Lys-289 is required for virulence function to some extent, it is not essential.

The protein resides in the secreted. It is found in the host cell membrane. It localises to the host cytoplasm. Its subcellular location is the host cytoskeleton. The protein localises to the host nucleus. The enzyme catalyses L-threonyl-[protein] + acetyl-CoA = O-acetyl-L-threonyl-[protein] + CoA. It catalyses the reaction L-seryl-[protein] + acetyl-CoA = O-acetyl-L-seryl-[protein] + CoA. It carries out the reaction L-lysyl-[protein] + acetyl-CoA = N(6)-acetyl-L-lysyl-[protein] + CoA + H(+). 1D-myo-inositol hexakisphosphate activates protein-acetyltransferase activity via an allosteric mechanism: 1D-myo-inositol hexakisphosphate-binding induces a conformational rearrangement that stimulates the interaction with acetyl-CoA. Acetyltransferase activity is activated by phytic acid. Its function is as follows. Serine/threonine-protein acetyltransferase translocated into infected cells, which impairs host microtubule network and host immunity by mediating acetylation of target proteins. Blocks secretion in host cells by mediating acetylation of host tubulin, thereby impairing host microbubule network. Impairs host cell immunity by mediating acetylation of host TIFY/JAZ transcription repressors (Arabidopsis thaliana TIFY10B/JAZ2, TIFY11A/JAZ5, TIFY11B/JAZ6, TIFY5A/JAZ8, TIFY9/JAZ10 and TIFY3B/JAZ12), thereby activating host jasmonate signaling. This is Serine/threonine-protein acetyltransferase HopZ1a from Pseudomonas syringae pv. syringae.